A 122-amino-acid chain; its full sequence is MIPGEYFISKGDIECNVDRKTTKIKVINTGDRPIQVGSHCHFFEINRMMSFDRSEAFGMRLNIAAGTAVRFEPGEEKEVELVAFSGARRAFGINNIVNGDTTLEINKQHSLAKLKTENFKNK.

This sequence belongs to the urease beta subunit family. In terms of assembly, heterotrimer of UreA (gamma), UreB (beta) and UreC (alpha) subunits. Three heterotrimers associate to form the active enzyme.

It is found in the cytoplasm. It carries out the reaction urea + 2 H2O + H(+) = hydrogencarbonate + 2 NH4(+). It participates in nitrogen metabolism; urea degradation; CO(2) and NH(3) from urea (urease route): step 1/1. The protein is Urease subunit beta of Flavobacterium johnsoniae (strain ATCC 17061 / DSM 2064 / JCM 8514 / BCRC 14874 / CCUG 350202 / NBRC 14942 / NCIMB 11054 / UW101) (Cytophaga johnsonae).